The primary structure comprises 463 residues: L-seryl-tRNA(Sec) selenium transferase (463 aa).

Residue Lys295 is modified to N6-(pyridoxal phosphate)lysine.

Belongs to the SelA family. As to quaternary structure, homodecamer; pentamer of dimers. Binds only one seryl-tRNA(Sec) per dimer. It depends on pyridoxal 5'-phosphate as a cofactor.

Its subcellular location is the cytoplasm. It carries out the reaction L-seryl-tRNA(Sec) + selenophosphate + H(+) = L-selenocysteinyl-tRNA(Sec) + phosphate. It participates in aminoacyl-tRNA biosynthesis; selenocysteinyl-tRNA(Sec) biosynthesis; selenocysteinyl-tRNA(Sec) from L-seryl-tRNA(Sec) (bacterial route): step 1/1. In terms of biological role, converts seryl-tRNA(Sec) to selenocysteinyl-tRNA(Sec) required for selenoprotein biosynthesis. In Escherichia coli (strain K12 / MC4100 / BW2952), this protein is L-seryl-tRNA(Sec) selenium transferase.